A 117-amino-acid chain; its full sequence is Heat shock 70 kDa protein 1-like (117 aa).

Residues 72–75 (ERAK) and 84–87 (GSTR) contribute to the ATP site.

This sequence belongs to the heat shock protein 70 family. Interacts with PRKN. In terms of tissue distribution, detected at higher levels in caput epididymal spermatazoa than in cauda epididymal spermatazoa (at protein level).

In terms of biological role, molecular chaperone implicated in a wide variety of cellular processes, including protection of the proteome from stress, folding and transport of newly synthesized polypeptides, activation of proteolysis of misfolded proteins and the formation and dissociation of protein complexes. Plays a pivotal role in the protein quality control system, ensuring the correct folding of proteins, the re-folding of misfolded proteins and controlling the targeting of proteins for subsequent degradation. This is achieved through cycles of ATP binding, ATP hydrolysis and ADP release, mediated by co-chaperones. The affinity for polypeptides is regulated by its nucleotide bound state. In the ATP-bound form, it has a low affinity for substrate proteins. However, upon hydrolysis of the ATP to ADP, it undergoes a conformational change that increases its affinity for substrate proteins. It goes through repeated cycles of ATP hydrolysis and nucleotide exchange, which permits cycles of substrate binding and release. Positive regulator of PRKN translocation to damaged mitochondria. This chain is Heat shock 70 kDa protein 1-like, found in Mesocricetus auratus (Golden hamster).